The following is a 262-amino-acid chain: Phosphomannomutase 1 (262 aa).

N-acetylalanine is present on Ala2. Catalysis depends on Asp19, which acts as the Nucleophile. The Mg(2+) site is built by Asp19 and Asp21. Asp21 acts as the Proton donor/acceptor in catalysis. Alpha-D-mannose 1-phosphate contacts are provided by Arg28, Arg132, Arg143, Arg150, Met186, Ser188, and Asp190. Residues Asn218, Tyr230, Asp232, and Thr235 each contribute to the Mg(2+) site. Ser242 is modified (phosphoserine).

Belongs to the eukaryotic PMM family. As to quaternary structure, homodimer. Mg(2+) is required as a cofactor. In terms of tissue distribution, present in brain, where it is restricted to neuronal cell bodies. Present at lower levels in pancreas, liver, lung, gonads, uterus, adrenal glands and pituitary (at protein level). Undetectable in intestine.

It is found in the cytoplasm. The catalysed reaction is alpha-D-mannose 1-phosphate = D-mannose 6-phosphate. Its pathway is nucleotide-sugar biosynthesis; GDP-alpha-D-mannose biosynthesis; alpha-D-mannose 1-phosphate from D-fructose 6-phosphate: step 2/2. Its activity is regulated as follows. IMP, a metabolite whose concentration is elevated in anoxia, inhibits phosphomannomutase and phosphoglucomutase activities and strongly enhances glucose-1,6-bisphosphatase activity. Its function is as follows. Involved in the synthesis of the GDP-mannose and dolichol-phosphate-mannose required for a number of critical mannosyl transfer reactions. In addition, may be responsible for the degradation of glucose-1,6-bisphosphate in ischemic brain. The protein is Phosphomannomutase 1 (Pmm1) of Mus musculus (Mouse).